Reading from the N-terminus, the 396-residue chain is MTEHNVRNFNINFGPQHPAAHGVLRLVLELDGEIVERVDPHIGLLHRGTEKLIETKTYLQAVPYFDRLDYVAPMNQEHAYAMAVEKLLGIEIPIRGQLIRVLYSEIGRILSHLLNVTTQAMDVGALTPPLWGFEEREKLMVFYERASGSRMHAAYFRPGGVHQDLPEQLVQDIGAWCDPFLKALDDIDNLLTGNRIFKQRNVDIGVVSLDECWAWGFSGVMVRGSGAAWDLRRAQPYECYSDLEFDIPIGKNGDNYDRYLIRMIEMRESVRIMKQCVNRLLSDAKTGPFSSIDGKVVPPKRGEMKRSMEALIHHFKLYTEGYHVPAGEVYAAVEAPKGEFGVYLVSDGTNKPYRCKIRAPGYAHLQAMDFMCRGHQLADVAAVLGSLDIVFGEVDR.

It belongs to the complex I 49 kDa subunit family. As to quaternary structure, NDH-1 is composed of 14 different subunits. Subunits NuoB, C, D, E, F, and G constitute the peripheral sector of the complex.

Its subcellular location is the cell inner membrane. It catalyses the reaction a quinone + NADH + 5 H(+)(in) = a quinol + NAD(+) + 4 H(+)(out). In terms of biological role, NDH-1 shuttles electrons from NADH, via FMN and iron-sulfur (Fe-S) centers, to quinones in the respiratory chain. The immediate electron acceptor for the enzyme in this species is believed to be ubiquinone. Couples the redox reaction to proton translocation (for every two electrons transferred, four hydrogen ions are translocated across the cytoplasmic membrane), and thus conserves the redox energy in a proton gradient. This is NADH-quinone oxidoreductase subunit D from Rhizobium johnstonii (strain DSM 114642 / LMG 32736 / 3841) (Rhizobium leguminosarum bv. viciae).